The following is a 154-amino-acid chain: Small ribosomal subunit protein eS10 (154 aa).

Positions 91-154 are disordered; the sequence is ATMKKQASRP…ERSAPAPQQN (64 aa). Residues 124 to 135 show a composition bias toward basic and acidic residues; it reads RGDRRQGGDRRG.

Belongs to the eukaryotic ribosomal protein eS10 family.

The protein resides in the cytoplasm. This chain is Small ribosomal subunit protein eS10 (rps10), found in Dictyostelium discoideum (Social amoeba).